The chain runs to 127 residues: uncharacterized protein (127 aa).

A helical transmembrane segment spans residues V85–D107.

The protein localises to the mitochondrion membrane. This is an uncharacterized protein from Dictyostelium discoideum (Social amoeba).